The primary structure comprises 148 residues: SsrA-binding protein (148 aa).

Residues 129-142 show a composition bias toward basic and acidic residues; that stretch reads ETEKKRDWEREKAR. Residues 129 to 148 are disordered; the sequence is ETEKKRDWEREKARIMRAGT.

It belongs to the SmpB family.

It localises to the cytoplasm. Functionally, required for rescue of stalled ribosomes mediated by trans-translation. Binds to transfer-messenger RNA (tmRNA), required for stable association of tmRNA with ribosomes. tmRNA and SmpB together mimic tRNA shape, replacing the anticodon stem-loop with SmpB. tmRNA is encoded by the ssrA gene; the 2 termini fold to resemble tRNA(Ala) and it encodes a 'tag peptide', a short internal open reading frame. During trans-translation Ala-aminoacylated tmRNA acts like a tRNA, entering the A-site of stalled ribosomes, displacing the stalled mRNA. The ribosome then switches to translate the ORF on the tmRNA; the nascent peptide is terminated with the 'tag peptide' encoded by the tmRNA and targeted for degradation. The ribosome is freed to recommence translation, which seems to be the essential function of trans-translation. This Burkholderia lata (strain ATCC 17760 / DSM 23089 / LMG 22485 / NCIMB 9086 / R18194 / 383) protein is SsrA-binding protein.